The chain runs to 306 residues: Replication termination factor 2 (306 aa).

Residues Ala193–Glu276 form a disordered region. The segment covering Gly226 to Thr240 has biased composition (basic and acidic residues). Residues Ala243 to Gly255 are compositionally biased toward polar residues. Ser287 is modified (phosphoserine).

It belongs to the rtf2 family. In terms of assembly, interacts with DDI2; probably also interacts with DDI1. In terms of processing, undergoes proteasomal degradation, via DDI1 and DDI2. Removal from stalled replisomes and degradation are required for genome stability.

It is found in the chromosome. In terms of biological role, replication termination factor which is a component of the elongating replisome. Required for ATR pathway signaling upon DNA damage and has a positive activity during DNA replication. Might function to facilitate fork pausing at replication fork barriers like the rDNA. May be globally required to stimulate ATR signaling after the fork stalls or encounters a lesion. Interacts with nascent DNA. The chain is Replication termination factor 2 from Homo sapiens (Human).